We begin with the raw amino-acid sequence, 90 residues long: UPF0297 protein lwe1516 (90 aa).

This sequence belongs to the UPF0297 family.

This is UPF0297 protein lwe1516 from Listeria welshimeri serovar 6b (strain ATCC 35897 / DSM 20650 / CCUG 15529 / CIP 8149 / NCTC 11857 / SLCC 5334 / V8).